Here is a 337-residue protein sequence, read N- to C-terminus: Fructose-1,6-bisphosphatase class 1 (337 aa).

Mg(2+) is bound by residues E94, D116, L118, and D119. Residues 119 to 122 (DGSS), N210, and K276 contribute to the substrate site. A Mg(2+)-binding site is contributed by E282.

The protein belongs to the FBPase class 1 family. As to quaternary structure, homotetramer. Mg(2+) is required as a cofactor.

The protein localises to the cytoplasm. The catalysed reaction is beta-D-fructose 1,6-bisphosphate + H2O = beta-D-fructose 6-phosphate + phosphate. The protein operates within carbohydrate biosynthesis; gluconeogenesis. The sequence is that of Fructose-1,6-bisphosphatase class 1 from Burkholderia multivorans (strain ATCC 17616 / 249).